An 842-amino-acid polypeptide reads, in one-letter code: Translation initiation factor IF-2 (842 aa).

The disordered stretch occupies residues 94–259 (QRSPEEIQAE…HGFQNPTGPV (166 aa)). A compositionally biased stretch (basic and acidic residues) spans 96–138 (SPEEIQAEQKRELDERRAAENAARDKVEAEVRQRNEEQARRQA). The span at 139 to 148 (ADSAVAAPAP) shows a compositional bias: low complexity. Residues 149–159 (AAKPEPAPAAA) show a composition bias toward pro residues. The segment covering 160–172 (PAPVVADAPASED) has biased composition (low complexity). 2 stretches are compositionally biased toward basic and acidic residues: residues 173-202 (AAAR…RGEA) and 226-235 (TTDEESDGAR). The span at 236-249 (RGRGGKGKLKKRNQ) shows a compositional bias: basic residues. The tr-type G domain occupies 342-509 (SRAPVVTVMG…AVLLQAEILE (168 aa)). Residues 351 to 358 (GHVDHGKT) are G1. Residue 351–358 (GHVDHGKT) coordinates GTP. A G2 region spans residues 376–380 (GITQH). The interval 397–400 (DTPG) is G3. GTP-binding positions include 397–401 (DTPGH) and 451–454 (NKID). The segment at 451-454 (NKID) is G4. The segment at 487-489 (SAK) is G5.

It belongs to the TRAFAC class translation factor GTPase superfamily. Classic translation factor GTPase family. IF-2 subfamily.

It is found in the cytoplasm. One of the essential components for the initiation of protein synthesis. Protects formylmethionyl-tRNA from spontaneous hydrolysis and promotes its binding to the 30S ribosomal subunits. Also involved in the hydrolysis of GTP during the formation of the 70S ribosomal complex. The polypeptide is Translation initiation factor IF-2 (Pseudomonas putida (strain GB-1)).